A 272-amino-acid chain; its full sequence is MTTTLSSNWKKLSSKLNQGSKVTKQPVKGKNGKTKIKKAELENTLNITPTLQKSTLSPIELALWTKENDINVSDIAVQTEKITLIPQGNDIRKKEPGKYLAMDCEFVGVGPEGTESALARVSIVNFYGHTVFDKFVKPRERVTDWRTWVSGVTPKHMNEAISFQEAQNETSKLLEGRILVGHAIHHDLDALFLSHPKSRIRDTSQYKPFRSISMGKTPSLKKLSSHFLKIDIQGSAHSSVEDARATMLLFRLHRKEFEQSIRTQNRKPEKTS.

Over residues 1–17 (MTTTLSSNWKKLSSKLN) the composition is skewed to low complexity. Positions 1-33 (MTTTLSSNWKKLSSKLNQGSKVTKQPVKGKNGK) are disordered. In terms of domain architecture, Exonuclease spans 99 to 250 (YLAMDCEFVG…EDARATMLLF (152 aa)).

This sequence belongs to the REXO4 family.

It is found in the nucleus. Functionally, exoribonuclease involved in ribosome biosynthesis. Involved in the processing of ITS1, the internal transcribed spacer localized between the 18S and 5.8S rRNAs. The sequence is that of RNA exonuclease 4 (REX4) from Debaryomyces hansenii (strain ATCC 36239 / CBS 767 / BCRC 21394 / JCM 1990 / NBRC 0083 / IGC 2968) (Yeast).